A 306-amino-acid polypeptide reads, in one-letter code: MSKKIKCALIGPGNIGTDLLYKLRRSPVLDPVWMVGVDPTSEGLKRARELGLKTTEQGVDGLLPHVLADGVQIAFDATSAYVHAENSRRLTELGVLVIDLTPAAIGPFCVPPVNLLALVGRRVMNVNMVTCGGQATIPMIAAISRVQPVRYGEIVATISSKSAGPGTRKNIDEFTRTTSRAIEQVGGAAKGKAIIIINPAEPPLVMRDTVHCLTETEPDQAKITASIHAMIKEVQKYVPGYKLVNGPVFDDKRVSVFLEVEGLGDFLPKYSGNLDIMTAAAARTAEMFAEEILAGRINLQPMATVA.

C131 acts as the Acyl-thioester intermediate in catalysis. Residues 162 to 170 and N273 each bind NAD(+); that span reads SAGPGTRKN.

This sequence belongs to the acetaldehyde dehydrogenase family.

The enzyme catalyses acetaldehyde + NAD(+) + CoA = acetyl-CoA + NADH + H(+). This Albidiferax ferrireducens (strain ATCC BAA-621 / DSM 15236 / T118) (Rhodoferax ferrireducens) protein is Acetaldehyde dehydrogenase.